Here is a 310-residue protein sequence, read N- to C-terminus: Ribosomal RNA small subunit methyltransferase H (310 aa).

Residues 33 to 35 (AGH), D53, F79, D100, and Q107 contribute to the S-adenosyl-L-methionine site.

The protein belongs to the methyltransferase superfamily. RsmH family.

It localises to the cytoplasm. The catalysed reaction is cytidine(1402) in 16S rRNA + S-adenosyl-L-methionine = N(4)-methylcytidine(1402) in 16S rRNA + S-adenosyl-L-homocysteine + H(+). Specifically methylates the N4 position of cytidine in position 1402 (C1402) of 16S rRNA. The protein is Ribosomal RNA small subunit methyltransferase H of Clostridium beijerinckii (strain ATCC 51743 / NCIMB 8052) (Clostridium acetobutylicum).